A 39-amino-acid polypeptide reads, in one-letter code: Photosystem II reaction center protein J (39 aa).

Residues 7–27 traverse the membrane as a helical segment; the sequence is IPLWIVAVVVGLGVVTVVGLF.

This sequence belongs to the PsbJ family. PSII is composed of 1 copy each of membrane proteins PsbA, PsbB, PsbC, PsbD, PsbE, PsbF, PsbH, PsbI, PsbJ, PsbK, PsbL, PsbM, PsbT, PsbX, PsbY, PsbZ, Psb30/Ycf12, peripheral proteins PsbO, CyanoQ (PsbQ), PsbU, PsbV and a large number of cofactors. It forms dimeric complexes.

The protein resides in the cellular thylakoid membrane. One of the components of the core complex of photosystem II (PSII). PSII is a light-driven water:plastoquinone oxidoreductase that uses light energy to abstract electrons from H(2)O, generating O(2) and a proton gradient subsequently used for ATP formation. It consists of a core antenna complex that captures photons, and an electron transfer chain that converts photonic excitation into a charge separation. This is Photosystem II reaction center protein J from Synechococcus sp. (strain JA-3-3Ab) (Cyanobacteria bacterium Yellowstone A-Prime).